Here is a 342-residue protein sequence, read N- to C-terminus: Ribosomal RNA small subunit methyltransferase C (342 aa).

This sequence belongs to the methyltransferase superfamily. RsmC family. Monomer.

It is found in the cytoplasm. It carries out the reaction guanosine(1207) in 16S rRNA + S-adenosyl-L-methionine = N(2)-methylguanosine(1207) in 16S rRNA + S-adenosyl-L-homocysteine + H(+). Its function is as follows. Specifically methylates the guanine in position 1207 of 16S rRNA in the 30S particle. In Klebsiella pneumoniae subsp. pneumoniae (strain ATCC 700721 / MGH 78578), this protein is Ribosomal RNA small subunit methyltransferase C.